Reading from the N-terminus, the 121-residue chain is Holo-[acyl-carrier-protein] synthase (121 aa).

Asp8 and Glu58 together coordinate Mg(2+).

This sequence belongs to the P-Pant transferase superfamily. AcpS family. In terms of assembly, homotrimer. Mg(2+) serves as cofactor.

Its subcellular location is the cytoplasm. The catalysed reaction is apo-[ACP] + CoA = holo-[ACP] + adenosine 3',5'-bisphosphate + H(+). Transfers the 4'-phosphopantetheine moiety from coenzyme A to a Ser of fatty acid acyl-carrier-protein ACP. Also modifies the D-alanyl carrier protein but fails to recognize PCP and AcpK, an acyl carrier protein of secondary metabolism. The chain is Holo-[acyl-carrier-protein] synthase from Bacillus subtilis (strain 168).